The chain runs to 383 residues: Acetylornithine deacetylase (383 aa).

Zn(2+) is bound at residue histidine 80. The active site involves aspartate 82. Aspartate 112 lines the Zn(2+) pocket. Residue glutamate 144 is part of the active site. Zn(2+) contacts are provided by glutamate 145, glutamate 169, and histidine 355.

This sequence belongs to the peptidase M20A family. ArgE subfamily. Homodimer. Zn(2+) serves as cofactor. The cofactor is Co(2+). It depends on glutathione as a cofactor.

Its subcellular location is the cytoplasm. It catalyses the reaction N(2)-acetyl-L-ornithine + H2O = L-ornithine + acetate. It functions in the pathway amino-acid biosynthesis; L-arginine biosynthesis; L-ornithine from N(2)-acetyl-L-ornithine (linear): step 1/1. Its function is as follows. Catalyzes the hydrolysis of the amide bond of N(2)-acetylated L-amino acids. Cleaves the acetyl group from N-acetyl-L-ornithine to form L-ornithine, an intermediate in L-arginine biosynthesis pathway, and a branchpoint in the synthesis of polyamines. This Shigella sonnei (strain Ss046) protein is Acetylornithine deacetylase.